The sequence spans 364 residues: tRNA 2-selenouridine synthase (364 aa).

Positions Leu14–Trp137 constitute a Rhodanese domain. Cys97 serves as the catalytic S-selanylcysteine intermediate.

The protein belongs to the SelU family. Monomer.

The catalysed reaction is 5-methylaminomethyl-2-thiouridine(34) in tRNA + selenophosphate + (2E)-geranyl diphosphate + H2O + H(+) = 5-methylaminomethyl-2-selenouridine(34) in tRNA + (2E)-thiogeraniol + phosphate + diphosphate. It carries out the reaction 5-methylaminomethyl-2-thiouridine(34) in tRNA + (2E)-geranyl diphosphate = 5-methylaminomethyl-S-(2E)-geranyl-thiouridine(34) in tRNA + diphosphate. The enzyme catalyses 5-methylaminomethyl-S-(2E)-geranyl-thiouridine(34) in tRNA + selenophosphate + H(+) = 5-methylaminomethyl-2-(Se-phospho)selenouridine(34) in tRNA + (2E)-thiogeraniol. It catalyses the reaction 5-methylaminomethyl-2-(Se-phospho)selenouridine(34) in tRNA + H2O = 5-methylaminomethyl-2-selenouridine(34) in tRNA + phosphate. In terms of biological role, involved in the post-transcriptional modification of the uridine at the wobble position (U34) of tRNA(Lys), tRNA(Glu) and tRNA(Gln). Catalyzes the conversion of 2-thiouridine (S2U-RNA) to 2-selenouridine (Se2U-RNA). Acts in a two-step process involving geranylation of 2-thiouridine (S2U) to S-geranyl-2-thiouridine (geS2U) and subsequent selenation of the latter derivative to 2-selenouridine (Se2U) in the tRNA chain. This chain is tRNA 2-selenouridine synthase, found in Salmonella dublin (strain CT_02021853).